Reading from the N-terminus, the 380-residue chain is mRNA cap guanine-N(7) methyltransferase (380 aa).

An mRNA cap 0 methyltransferase domain is found at 24-333; that stretch reads SRIFFMRNMN…MYLVFGFRKK (310 aa). Position 33–34 (33–34) interacts with mRNA; that stretch reads NN. Residues lysine 37, alanine 62, aspartate 84, aspartate 117, glutamine 139, and tyrosine 144 each coordinate S-adenosyl-L-methionine. A disordered region spans residues 336–380; sequence EAEKTEEEPATTKPVAESESEQKEVTESEEKEDQEDCEHQEAQTN.

Belongs to the class I-like SAM-binding methyltransferase superfamily. mRNA cap 0 methyltransferase family.

The protein resides in the nucleus. It carries out the reaction a 5'-end (5'-triphosphoguanosine)-ribonucleoside in mRNA + S-adenosyl-L-methionine = a 5'-end (N(7)-methyl 5'-triphosphoguanosine)-ribonucleoside in mRNA + S-adenosyl-L-homocysteine. In terms of biological role, mRNA-capping methyltransferase that methylates the N7 position of the added guanosine to the 5'-cap structure of mRNAs. Binds RNA containing 5'-terminal GpppC. This Caenorhabditis elegans protein is mRNA cap guanine-N(7) methyltransferase (tag-72).